The sequence spans 210 residues: Small ribosomal subunit protein uS7 (210 aa).

This sequence belongs to the universal ribosomal protein uS7 family.

The chain is Small ribosomal subunit protein uS7 (RPS5) from Podocoryna carnea (Hydrozoan).